We begin with the raw amino-acid sequence, 184 residues long: MTWRSEHIWIELITGSRKISNFCWAFILFLGSLGFLLVGTSSYLGRNLISFFPTQQIVFFPQGIVMSFYGIAGLFISSYLWCTISWNVGSGYDRFDRKEGIVCIFRWGFPGKNRRIFLRFLIKDIQSVRIEVKEGISARRVLYMDIRGQGSIPLTRTDENLTPREIEQKAAELAYFLRVPIEVF.

2 helical membrane-spanning segments follow: residues 19 to 39 (ISNFCWAFILFLGSLGFLLVG) and 57 to 77 (IVFFPQGIVMSFYGIAGLFIS).

This sequence belongs to the Ycf4 family.

The protein resides in the plastid. The protein localises to the chloroplast thylakoid membrane. In terms of biological role, seems to be required for the assembly of the photosystem I complex. The sequence is that of Photosystem I assembly protein Ycf4 from Atropa belladonna (Belladonna).